The chain runs to 660 residues: Putative ABC transporter ATP-binding MG390 homolog (660 aa).

Residues 6–126 (QEQPNECGIC…KQWTGYAATV (121 aa)) form the Peptidase C39 domain. The active site involves cysteine 12. Transmembrane regions (helical) follow at residues 150 to 170 (LIIFYVFIELIIIGISTLLAT), 188 to 208 (IVVFVVFFLVLKGLYLLLYAL), 265 to 285 (HIPNLIISCTVALIIGTLIGI), 290 to 310 (FLWIAIVQIVVNCAIFLYDFF), 379 to 399 (SFAQQVFDFLILALGIIGIIE), and 402 to 422 (YTLAFLFYIFSIQALFSAYAT). An ABC transporter domain is found at 464–660 (INLNNCSITL…INLSPYLQQT (197 aa)). An ATP-binding site is contributed by 494-501 (GENGSGKS).

The protein belongs to the ABC transporter superfamily.

The protein localises to the cell membrane. This Mycoplasma pneumoniae (strain ATCC 29342 / M129 / Subtype 1) (Mycoplasmoides pneumoniae) protein is Putative ABC transporter ATP-binding MG390 homolog.